Here is a 291-residue protein sequence, read N- to C-terminus: Small ribosomal subunit protein uS2 (291 aa).

A disordered region spans residues Leu256–Val291. The segment covering Thr261 to Val291 has biased composition (low complexity).

It belongs to the universal ribosomal protein uS2 family.

This Frankia alni (strain DSM 45986 / CECT 9034 / ACN14a) protein is Small ribosomal subunit protein uS2.